Consider the following 184-residue polypeptide: Large ribosomal subunit protein eL18 (184 aa).

It belongs to the eukaryotic ribosomal protein eL18 family.

It is found in the cytoplasm. The chain is Large ribosomal subunit protein eL18 (RPL18) from Theileria parva (East coast fever infection agent).